An 88-amino-acid polypeptide reads, in one-letter code: Metastasis-suppressor KiSS-1 (88 aa).

Polar residues predominate over residues 1–13 (SVENSRPTGQQLE). A disordered region spans residues 1 to 88 (SVENSRPTGQ…REKDLPNYNW (88 aa)). The span at 33–55 (SATARLSRRGASLSSPAESSGSP) shows a compositional bias: low complexity. A compositionally biased stretch (basic and acidic residues) spans 78–88 (QREKDLPNYNW). Tyr86 is modified (phosphotyrosine).

Belongs to the KISS1 family. In the hypothalamus, expression increases with puberty in both male and female monkeys. Robust expression in the region of the arcuate nucleus (ARC).

It is found in the secreted. Functionally, metastasis suppressor protein. May regulate events downstream of cell-matrix adhesion, perhaps involving cytoskeletal reorganization. Generates a C-terminally amidated peptide, metastin which functions as the endogenous ligand of the G-protein coupled receptor GPR54. The receptor is essential for normal gonadotropin-released hormone physiology and for puberty. The hypothalamic KiSS1/GPR54 system is a pivotal factor in central regulation of the gonadotropic axis at puberty and in adulthood. This Macaca mulatta (Rhesus macaque) protein is Metastasis-suppressor KiSS-1 (KISS1).